Reading from the N-terminus, the 387-residue chain is Probable peptidoglycan glycosyltransferase FtsW (387 aa).

9 consecutive transmembrane segments (helical) span residues 19 to 39 (LDFSLYATVAILISVGIVMVA), 61 to 81 (ITFLAMGLVGGLVILAVPMSV), 86 to 106 (SGLLLILAFFLLMAVLIPGIG), 118 to 138 (LGPFSMQASEIAKFCLIVYFA), 161 to 181 (VLLIIVLLLLLEPDFGSSVVI), 199 to 219 (FLLLAVSGVAGLALMAVASPY), 286 to 306 (FIGAIALIGVFGFFLYRLVIL), 320 to 340 (YVVFGIGVMLAMQAFINMGVA), and 352 to 372 (PFISYGGSSLLITCGLMALVF).

This sequence belongs to the SEDS family. FtsW subfamily.

It localises to the cell inner membrane. It carries out the reaction [GlcNAc-(1-&gt;4)-Mur2Ac(oyl-L-Ala-gamma-D-Glu-L-Lys-D-Ala-D-Ala)](n)-di-trans,octa-cis-undecaprenyl diphosphate + beta-D-GlcNAc-(1-&gt;4)-Mur2Ac(oyl-L-Ala-gamma-D-Glu-L-Lys-D-Ala-D-Ala)-di-trans,octa-cis-undecaprenyl diphosphate = [GlcNAc-(1-&gt;4)-Mur2Ac(oyl-L-Ala-gamma-D-Glu-L-Lys-D-Ala-D-Ala)](n+1)-di-trans,octa-cis-undecaprenyl diphosphate + di-trans,octa-cis-undecaprenyl diphosphate + H(+). It participates in cell wall biogenesis; peptidoglycan biosynthesis. Peptidoglycan polymerase that is essential for cell division. The polypeptide is Probable peptidoglycan glycosyltransferase FtsW (Saccharophagus degradans (strain 2-40 / ATCC 43961 / DSM 17024)).